We begin with the raw amino-acid sequence, 303 residues long: uncharacterized protein (303 aa).

2 disordered regions span residues 1–89 and 132–159; these read MTSP…NVRS and SELP…STPR. Positions 61–89 are enriched in polar residues; sequence RASQSGYRPSDPLTTTRQSNPAPGANVRS. 2 consecutive transmembrane segments (helical) span residues 205–225 and 264–284; these read LLLS…LYLL and VLVG…AAFV.

To M.tuberculosis Rv0007.

It is found in the cell membrane. This is an uncharacterized protein from Mycobacterium leprae (strain TN).